A 519-amino-acid chain; its full sequence is Na(+)/H(+) exchange regulatory cofactor NHE-RF3 (519 aa).

3 consecutive PDZ domains span residues Glu-9–Asp-90, Arg-134–Glu-215, and Ile-243–Glu-323. Ser-148, Ser-192, Ser-250, Ser-334, and Ser-348 each carry phosphoserine. The segment at Gly-347 to His-374 is disordered. Positions Pro-357–Asp-367 are enriched in polar residues. The 81-residue stretch at Leu-378–Lys-458 folds into the PDZ 4 domain. At Thr-451 the chain carries Phosphothreonine. A disordered region spans residues Ser-473–Met-519. A compositionally biased stretch (basic and acidic residues) spans Pro-482–His-504. Ser-492, Ser-508, Ser-510, Ser-511, Ser-512, and Ser-514 each carry phosphoserine. The span at Ser-505 to Met-519 shows a compositional bias: low complexity.

This sequence belongs to the NHER family. In terms of assembly, interacts with PDZK1IP1 and ABCC2. Binds to the C-terminal region of SLC26A3. Interacts (via PDZ domains 1 and 3) with SCARB1 (C-terminal domain). Forms a heterodimeric complex with NHERF1. Interacts with AKAP2, BCR, CFTR, SLCO1A1, SLC22A12, SLC22A4, SLC22A5, NHERF2 and SLC17A1. Component of a complex, composed of PDZK1, SYNGAP1, KLHL17 and NMDA receptors. Interacts (via PDZ1 domain) directly with KLHL17; the interaction is important for integrity of actin cytoskeleton structures in neurons. Interacts (via C-terminal PDZ domain) with SLC26A6 (via C-terminal domain). Interacts (via C-terminal PDZ domain) with SLC9A3 (via C-terminal domain). Interacts (via the first PDZ domain) with PTGIR (via non-isoprenylated C-terminus). Interacts (via PDZ domains 1 and 3) with SLC5A8 (via PDZ-binding motif); interaction increases nicotinate transport activity of SLC5A8.

It localises to the membrane. It is found in the cell membrane. A scaffold protein that connects plasma membrane proteins and regulatory components, regulating their surface expression in epithelial cells apical domains. May be involved in the coordination of a diverse range of regulatory processes for ion transport and second messenger cascades. In complex with NHERF1, may cluster proteins that are functionally dependent in a mutual fashion and modulate the trafficking and the activity of the associated membrane proteins. May play a role in the cellular mechanisms associated with multidrug resistance through its interaction with ABCC2 and PDZK1IP1. May potentiate the CFTR chloride channel activity. Required for normal cell-surface expression of SCARB1. Plays a role in maintaining normal plasma cholesterol levels via its effects on SCARB1. Plays a role in the normal localization and function of the chloride-anion exchanger SLC26A6 to the plasma membrane in the brush border of the proximal tubule of the kidney. May be involved in the regulation of proximal tubular Na(+)-dependent inorganic phosphate cotransport therefore playing an important role in tubule function. This Pongo abelii (Sumatran orangutan) protein is Na(+)/H(+) exchange regulatory cofactor NHE-RF3 (PDZK1).